A 309-amino-acid chain; its full sequence is MVATSFKLNNGLEIPAVGLGTWQSKAGEVKAAVSYALQIGYKLIDGAYCYGNEDEVGEGLKEAFAAGVKREDIFVVTKIWATYNTRVVLGLDKSLRSLGLDYVDLLLVHWPVLLNPEGNHDKFPTLPDGKRDVIWDYNHVDGWKQMEAVLATGKTKSIGVSNYSKKYLEQLLPHATVIPAVNQIENHPSLPQQEIVDFCKEKGIHIMAYSPLGSTGSPLMSADPVVKIAEKKGISPTTVLLSYHVNRGSTVLAKSVTPARIKANLEIVDLDDEDMKLLNDYSNDLASKGELKRYVYPPFGIDFGFPDKS.

Catalysis depends on Tyr-50, which acts as the Proton donor. His-109 provides a ligand contact to substrate. Residue 210 to 264 (SPLGSTGSPLMSADPVVKIAEKKGISPTTVLLSYHVNRGSTVLAKSVTPARIKAN) coordinates NADP(+).

Belongs to the aldo/keto reductase family.

It carries out the reaction L-galactonate + NADP(+) = aldehydo-D-galacturonate + NADPH + H(+). It participates in carbohydrate acid metabolism. Mediates the reduction of D-galacturonate to L-galactonate, the first step in D-galacturonate catabolic process. Also has activity with D-glucuronate and DL-glyceraldehyde. No activity is observed with D-glucose, D-fructose, D-xylose, D-galactose, L-arabinose or D-mannose. Activity is seen only with NADPH and not with NADH. The sequence is that of D-galacturonate reductase (gar1) from Hypocrea jecorina (Trichoderma reesei).